We begin with the raw amino-acid sequence, 1298 residues long: Histone-lysine N-methyltransferase EHMT1 (1298 aa).

Disordered regions lie at residues 1–111 and 144–192; these read MAAA…HVTA and ASSL…RKLP. The residue at position 2 (A2) is an N-acetylalanine. K22 participates in a covalent cross-link: Glycyl lysine isopeptide (Lys-Gly) (interchain with G-Cter in SUMO1); alternate. K22 is covalently cross-linked (Glycyl lysine isopeptide (Lys-Gly) (interchain with G-Cter in SUMO2); alternate). The span at 38–50 shows a compositional bias: basic and acidic residues; sequence SAEKQAGEAHMAA. 2 stretches are compositionally biased toward polar residues: residues 54 to 67 and 76 to 89; these read TNGS…SSHA and SARV…NTLT. The span at 96–105 shows a compositional bias: basic and acidic residues; that stretch reads VSERDSEAAK. Residues K190, K199, K231, K234, K317, and K327 each participate in a glycyl lysine isopeptide (Lys-Gly) (interchain with G-Cter in SUMO2) cross-link. Positions 211–234 are disordered; it reads VVGLHAASKDPREVREARDHKEPK. The span at 217–234 shows a compositional bias: basic and acidic residues; it reads ASKDPREVREARDHKEPK. The tract at residues 339-479 is disordered; the sequence is VNGESLEMDS…QTAPGDSTGY (141 aa). Acidic residues predominate over residues 344-360; it reads LEMDSDEDDSEELEEDD. Over residues 373–393 the composition is skewed to basic and acidic residues; that stretch reads EDSRTSKESMSEADRAQKMDG. The span at 394-416 shows a compositional bias: acidic residues; that stretch reads ESEEEQESVDTGEEEEGGDESDL. K432 is covalently cross-linked (Glycyl lysine isopeptide (Lys-Gly) (interchain with G-Cter in SUMO2)). Phosphoserine is present on S435. The span at 440 to 452 shows a compositional bias: basic residues; it reads PARKRRRRSRKKP. Residues 460-474 are compositionally biased toward polar residues; the sequence is SYKSSAGSAEQTAPG. Residue S483 is modified to Phosphoserine. Residues K492, K559, K644, K659, K684, and K731 each participate in a glycyl lysine isopeptide (Lys-Gly) (interchain with G-Cter in SUMO2) cross-link. The interval 644-717 is disordered; it reads KADTTSTVTP…TPGLSQGPGK (74 aa). 8 ANK repeats span residues 737 to 766, 772 to 801, 805 to 834, 838 to 868, 872 to 901, 905 to 934, 938 to 967, and 971 to 1004; these read FHPK…DPNF, NKRS…NIDT, DQRT…LVDP, EGST…DVNC, GGWT…DINI, EENI…DLHA, HGDS…DVTL, and EGET…DRPS. The tract at residues 905–907 is histone H3K9me binding; that stretch reads EEN. S1004 and S1048 each carry phosphoserine. The region spanning 1060–1123 is the Pre-SET domain; sequence QYCVCIDDCS…NCRNRVVQNG (64 aa). C1062, C1064, C1068, C1073, C1075, C1105, C1109, C1111, and C1115 together coordinate Zn(2+). In terms of domain architecture, SET spans 1126 to 1243; it reads ARLQLYRTRD…AGEQLGFDYG (118 aa). S-adenosyl-L-methionine-binding positions include 1136–1138, Y1173, and 1200–1201; these read MGW and NH. Residues 1162–1181 form an interaction with histone H3 region; it reads DSEADVREEDSYLFDLDNKD. C1203 is a Zn(2+) binding site. An interaction with histone H3 region spans residues 1242-1245; it reads YGER. A Zn(2+)-binding site is contributed by C1256. S-adenosyl-L-methionine is bound at residue R1257. Zn(2+) is bound by residues C1258 and C1263. Positions 1274 to 1298 are disordered; it reads QASAAQEAQEDGLPDTSSAAAADPL.

Belongs to the class V-like SAM-binding methyltransferase superfamily. As to quaternary structure, heterodimer; heterodimerizes with EHMT2. Interacts with WIZ and EHMT2. Part of the E2F6.com-1 complex in G0 phase composed of E2F6, MGA, MAX, TFDP1, CBX3, BAT8, EHMT1, RING1, RNF2, MBLR, L3MBTL2 and YAF2. Interacts (via ANK repeats) with RELA (when monomethylated at 'Lys-310'). Interacts with MPHOSPH8. Interacts with CDYL. Interacts with REST only in the presence of CDYL. Part of a complex containing at least CDYL, REST, WIZ, SETB1, EHMT1 and EHMT2. Interacts with BAZ2B. Widely expressed.

It is found in the nucleus. The protein resides in the chromosome. The enzyme catalyses N(6)-methyl-L-lysyl(9)-[histone H3] + S-adenosyl-L-methionine = N(6),N(6)-dimethyl-L-lysyl(9)-[histone H3] + S-adenosyl-L-homocysteine + H(+). The catalysed reaction is L-lysyl(9)-[histone H3] + S-adenosyl-L-methionine = N(6)-methyl-L-lysyl(9)-[histone H3] + S-adenosyl-L-homocysteine + H(+). Its activity is regulated as follows. Methyltransferase activity is inhibited by BIX-01294. Efficiently inhibited by compound E72, a BIX-01294 derivative in which the diazepane ring and the benzyl are replaced with a 3-dimethylaminopropyl and a 5-aminopentyl group at sites B and C, respectively. In terms of biological role, histone methyltransferase that specifically mono- and dimethylates 'Lys-9' of histone H3 (H3K9me1 and H3K9me2, respectively) in euchromatin. H3K9me represents a specific tag for epigenetic transcriptional repression by recruiting HP1 proteins to methylated histones. Also weakly methylates 'Lys-27' of histone H3 (H3K27me). Also required for DNA methylation, the histone methyltransferase activity is not required for DNA methylation, suggesting that these 2 activities function independently. Probably targeted to histone H3 by different DNA-binding proteins like E2F6, MGA, MAX and/or DP1. During G0 phase, it probably contributes to silencing of MYC- and E2F-responsive genes, suggesting a role in G0/G1 transition in cell cycle. In addition to the histone methyltransferase activity, also methylates non-histone proteins: mediates dimethylation of 'Lys-373' of p53/TP53. Represses the expression of mitochondrial function-related genes, perhaps by occupying their promoter regions, working in concert with probable chromatin reader BAZ2B. The chain is Histone-lysine N-methyltransferase EHMT1 (EHMT1) from Homo sapiens (Human).